Reading from the N-terminus, the 574-residue chain is uncharacterized protein (574 aa).

Residues 297 to 317 are disordered; that stretch reads SAASKPRKRKKDEVSGAQVNS.

This is an uncharacterized protein from Mus musculus (Mouse).